The following is a 695-amino-acid chain: uncharacterized protein (695 aa).

This is an uncharacterized protein from Xanthomonas campestris pv. campestris (strain ATCC 33913 / DSM 3586 / NCPPB 528 / LMG 568 / P 25).